The sequence spans 296 residues: DNA repair protein complementing XP-A cells homolog (296 aa).

Polar residues predominate over residues 1–10 (MSAEVSTNES). The tract at residues 1–39 (MSAEVSTNESAPPAEKKSKLTNAQKARIERNQAKAQKLR) is disordered. Positions 26 to 39 (ARIERNQAKAQKLR) are enriched in basic and acidic residues. Residues 26–47 (ARIERNQAKAQKLREAKLVSHP) carry the Nuclear localization signal motif. Zn(2+)-binding residues include Cys-126, Cys-129, Cys-147, and Cys-150. The segment at 126 to 150 (CLECGDMFADSYLFNNFGHSVCDKC) is a zinc-finger region.

This sequence belongs to the XPA family. In terms of tissue distribution, strongly expressed in the central nervous system and muscles.

The protein resides in the nucleus. Involved in DNA excision repair. Initiates repair by binding to damaged sites with various affinities, depending on the photoproduct and the transcriptional state of the region. The chain is DNA repair protein complementing XP-A cells homolog (Xpac) from Drosophila melanogaster (Fruit fly).